Reading from the N-terminus, the 334-residue chain is Glyceraldehyde-3-phosphate dehydrogenase (334 aa).

NAD(+) is bound by residues 10–11 (RI), D33, K77, and T119. Residues 149–151 (SCT), T180, 209–210 (TG), and R232 each bind D-glyceraldehyde 3-phosphate. C150 serves as the catalytic Nucleophile. An NAD(+)-binding site is contributed by N314.

It belongs to the glyceraldehyde-3-phosphate dehydrogenase family. As to quaternary structure, homotetramer.

It is found in the cytoplasm. The enzyme catalyses D-glyceraldehyde 3-phosphate + phosphate + NAD(+) = (2R)-3-phospho-glyceroyl phosphate + NADH + H(+). It participates in carbohydrate degradation; glycolysis; pyruvate from D-glyceraldehyde 3-phosphate: step 1/5. Catalyzes the oxidative phosphorylation of glyceraldehyde 3-phosphate (G3P) to 1,3-bisphosphoglycerate (BPG) using the cofactor NAD. The first reaction step involves the formation of a hemiacetal intermediate between G3P and a cysteine residue, and this hemiacetal intermediate is then oxidized to a thioester, with concomitant reduction of NAD to NADH. The reduced NADH is then exchanged with the second NAD, and the thioester is attacked by a nucleophilic inorganic phosphate to produce BPG. This chain is Glyceraldehyde-3-phosphate dehydrogenase (gap), found in Chlamydia trachomatis serovar L2 (strain ATCC VR-902B / DSM 19102 / 434/Bu).